The following is a 273-amino-acid chain: Large ribosomal subunit protein uL2 (273 aa).

A disordered region spans residues 228–273; it reads VDHPHGGGEGKTSGGRHPVTPWGFPTKGKKTRKNKRTSKFIIKKRK. The segment covering 254–273 has biased composition (basic residues); the sequence is KGKKTRKNKRTSKFIIKKRK.

This sequence belongs to the universal ribosomal protein uL2 family. In terms of assembly, part of the 50S ribosomal subunit. Forms a bridge to the 30S subunit in the 70S ribosome.

Its function is as follows. One of the primary rRNA binding proteins. Required for association of the 30S and 50S subunits to form the 70S ribosome, for tRNA binding and peptide bond formation. It has been suggested to have peptidyltransferase activity; this is somewhat controversial. Makes several contacts with the 16S rRNA in the 70S ribosome. This chain is Large ribosomal subunit protein uL2, found in Rickettsia bellii (strain OSU 85-389).